The chain runs to 662 residues: DNA topoisomerase 4 subunit B (662 aa).

ATP contacts are provided by residues tyrosine 20, asparagine 60, aspartate 87, 129–135 (GLHGVGV), and lysine 359. A Toprim domain is found at 439–553 (TELFIVEGDS…DGHLYLAKPP (115 aa)). Glutamate 445, aspartate 518, and aspartate 520 together coordinate Mg(2+).

The protein belongs to the type II topoisomerase family. ParE type 1 subfamily. As to quaternary structure, heterotetramer composed of ParC and ParE. Requires Mg(2+) as cofactor. It depends on Mn(2+) as a cofactor. Ca(2+) serves as cofactor.

It carries out the reaction ATP-dependent breakage, passage and rejoining of double-stranded DNA.. Its function is as follows. Topoisomerase IV is essential for chromosome segregation. It relaxes supercoiled DNA. Performs the decatenation events required during the replication of a circular DNA molecule. This Rickettsia bellii (strain RML369-C) protein is DNA topoisomerase 4 subunit B.